Here is a 121-residue protein sequence, read N- to C-terminus: ATP synthase epsilon chain (121 aa).

Belongs to the ATPase epsilon chain family. In terms of assembly, F-type ATPases have 2 components, CF(1) - the catalytic core - and CF(0) - the membrane proton channel. CF(1) has five subunits: alpha(3), beta(3), gamma(1), delta(1), epsilon(1). CF(0) has three main subunits: a, b and c.

The protein localises to the cell membrane. Produces ATP from ADP in the presence of a proton gradient across the membrane. The chain is ATP synthase epsilon chain from Mycobacterium avium (strain 104).